Reading from the N-terminus, the 401-residue chain is Argininosuccinate synthase (401 aa).

8–16 is an ATP binding site; it reads AYSGGLDTS. Residue Tyr-87 coordinates L-citrulline. Gly-117 lines the ATP pocket. L-aspartate contacts are provided by Thr-119, Asn-123, and Asp-124. Residue Asn-123 coordinates L-citrulline. L-citrulline is bound by residues Arg-127, Ser-175, Glu-259, and Tyr-271.

Belongs to the argininosuccinate synthase family. Type 1 subfamily. In terms of assembly, homotetramer.

It is found in the cytoplasm. It carries out the reaction L-citrulline + L-aspartate + ATP = 2-(N(omega)-L-arginino)succinate + AMP + diphosphate + H(+). The protein operates within amino-acid biosynthesis; L-arginine biosynthesis; L-arginine from L-ornithine and carbamoyl phosphate: step 2/3. The polypeptide is Argininosuccinate synthase (Pseudarthrobacter chlorophenolicus (strain ATCC 700700 / DSM 12829 / CIP 107037 / JCM 12360 / KCTC 9906 / NCIMB 13794 / A6) (Arthrobacter chlorophenolicus)).